Consider the following 350-residue polypeptide: UDP-glucose 4-epimerase (350 aa).

7–38 (KILVTGSAGFIGTHTVVQLLNNGFNVSIIDNF) provides a ligand contact to NAD(+). Residue serine 133 participates in substrate binding. Catalysis depends on tyrosine 157, which acts as the Proton acceptor.

It belongs to the NAD(P)-dependent epimerase/dehydratase family. Requires NAD(+) as cofactor.

The catalysed reaction is UDP-alpha-D-glucose = UDP-alpha-D-galactose. Its pathway is carbohydrate metabolism; galactose metabolism. In Pisum sativum (Garden pea), this protein is UDP-glucose 4-epimerase (GALE).